A 171-amino-acid polypeptide reads, in one-letter code: Ribosome maturation factor RimP (171 aa).

The protein belongs to the RimP family.

The protein localises to the cytoplasm. In terms of biological role, required for maturation of 30S ribosomal subunits. The sequence is that of Ribosome maturation factor RimP from Anaeromyxobacter dehalogenans (strain 2CP-1 / ATCC BAA-258).